The chain runs to 110 residues: Nucleoid-associated protein RALTA_A1934 (110 aa).

A compositionally biased stretch (polar residues) spans 88-98 (TTQEKMGSMTS). The tract at residues 88-110 (TTQEKMGSMTSGLPLPPGFKLPF) is disordered. A compositionally biased stretch (pro residues) spans 101–110 (PLPPGFKLPF).

The protein belongs to the YbaB/EbfC family. As to quaternary structure, homodimer.

The protein localises to the cytoplasm. The protein resides in the nucleoid. Its function is as follows. Binds to DNA and alters its conformation. May be involved in regulation of gene expression, nucleoid organization and DNA protection. This is Nucleoid-associated protein RALTA_A1934 from Cupriavidus taiwanensis (strain DSM 17343 / BCRC 17206 / CCUG 44338 / CIP 107171 / LMG 19424 / R1) (Ralstonia taiwanensis (strain LMG 19424)).